The chain runs to 1013 residues: GTPase-activating Rap/Ran-GAP domain-like protein 3 (1013 aa).

Position 45 is a phosphoserine (Ser-45). Positions 191-407 (LLVLEEQEGS…RTLDMLIRSL (217 aa)) constitute a Rap-GAP domain. Residues Ser-426 and Ser-432 each carry the phosphoserine modification. Positions 489–800 (PHEAVCADPW…QLVASRSDIY (312 aa)) constitute a CNH domain. 2 disordered regions span residues 810-842 (VSSG…SLGE) and 913-1013 (LLGL…IDLK). A compositionally biased stretch (low complexity) spans 811–821 (SSGGSSKGASA). A Phosphothreonine modification is found at Thr-827. A compositionally biased stretch (low complexity) spans 952-962 (SSSSDRIPSGS). Composition is skewed to polar residues over residues 963–982 (LESA…SSDQ) and 993–1003 (VSGSSPFQLTA).

This sequence belongs to the GARNL3 family.

This is GTPase-activating Rap/Ran-GAP domain-like protein 3 (GARNL3) from Homo sapiens (Human).